The chain runs to 308 residues: uncharacterized protein (308 aa).

The next 7 helical transmembrane spans lie at 10-30 (IILL…TNLI), 91-111 (LPTI…VVIL), 115-135 (LGLI…LIGI), 178-198 (VIPM…LGLM), 219-239 (ITVL…VDIL), 251-271 (LIVL…KHSI), and 288-308 (INYT…IAFF).

It to M.jannaschii MJ0871, MJ1556 and MJ1589.

The protein localises to the cell membrane. This is an uncharacterized protein from Methanocaldococcus jannaschii (strain ATCC 43067 / DSM 2661 / JAL-1 / JCM 10045 / NBRC 100440) (Methanococcus jannaschii).